An 86-amino-acid chain; its full sequence is Large ribosomal subunit protein uL23 (86 aa).

It belongs to the universal ribosomal protein uL23 family. As to quaternary structure, part of the 50S ribosomal subunit. Contacts protein L29.

In terms of biological role, binds to 23S rRNA. One of the proteins that surrounds the polypeptide exit tunnel on the outside of the ribosome. In Methanobrevibacter smithii (strain ATCC 35061 / DSM 861 / OCM 144 / PS), this protein is Large ribosomal subunit protein uL23.